The following is a 297-amino-acid chain: Acetylglutamate kinase (297 aa).

Substrate is bound by residues G70 to G71, R92, and N194.

The protein belongs to the acetylglutamate kinase family. ArgB subfamily.

It localises to the cytoplasm. The enzyme catalyses N-acetyl-L-glutamate + ATP = N-acetyl-L-glutamyl 5-phosphate + ADP. It functions in the pathway amino-acid biosynthesis; L-arginine biosynthesis; N(2)-acetyl-L-ornithine from L-glutamate: step 2/4. Catalyzes the ATP-dependent phosphorylation of N-acetyl-L-glutamate. This Herminiimonas arsenicoxydans protein is Acetylglutamate kinase.